A 97-amino-acid chain; its full sequence is MEQAPENQGPAKEPFNEWALELLEELKAEAVRHFPRPWLHALGQYIYETYGDTWVGVMAIIRILQQLLFTHYRIGCQHSRIGINPRGRGRRNGSSRS.

The tract at residues 1-42 is homooligomerization; it reads MEQAPENQGPAKEPFNEWALELLEELKAEAVRHFPRPWLHAL. Residues Ser-79, Ser-95, and Ser-97 each carry the phosphoserine; by host modification.

The protein belongs to the HIV-1 VPR protein family. Homooligomer, may form homodimer. Interacts with p6-gag region of the Pr55 Gag precursor protein through a (Leu-X-X)4 motif near the C-terminus of the P6gag protein. Interacts with host UNG. May interact with host RAD23A/HHR23A. Interacts with host VPRBP/DCAF1, leading to hijack the CUL4A-RBX1-DDB1-DCAF1/VPRBP complex, mediating ubiquitination of host proteins such as TERT and ZGPAT and arrest of the cell cycle in G2 phase. Post-translationally, phosphorylated on several residues by host. These phosphorylations regulate VPR activity for the nuclear import of the HIV-1 pre-integration complex.

The protein resides in the virion. Its subcellular location is the host nucleus. The protein localises to the host extracellular space. Its function is as follows. During virus replication, may deplete host UNG protein, and incude G2-M cell cycle arrest. Acts by targeting specific host proteins for degradation by the 26S proteasome, through association with the cellular CUL4A-DDB1 E3 ligase complex by direct interaction with host VPRPB/DCAF-1. Cell cycle arrest reportedly occurs within hours of infection and is not blocked by antiviral agents, suggesting that it is initiated by the VPR carried into the virion. Additionally, VPR induces apoptosis in a cell cycle dependent manner suggesting that these two effects are mechanistically linked. Detected in the serum and cerebrospinal fluid of AIDS patient, VPR may also induce cell death to bystander cells. In terms of biological role, during virus entry, plays a role in the transport of the viral pre-integration (PIC) complex to the host nucleus. This function is crucial for viral infection of non-dividing macrophages. May act directly at the nuclear pore complex, by binding nucleoporins phenylalanine-glycine (FG)-repeat regions. In Human immunodeficiency virus type 1 group O (isolate ANT70) (HIV-1), this protein is Protein Vpr.